A 2282-amino-acid chain; its full sequence is Serine/threonine-protein kinase TEL1 (2282 aa).

Residues 1325 to 1844 (EIVNSALTLH…LYQISSLMRT (520 aa)) form the FAT domain. Positions 1939 to 2250 (VLAQVIKAGG…LSGVKGKLAV (312 aa)) constitute a PI3K/PI4K catalytic domain. The interval 1945 to 1951 (KAGGISH) is G-loop. Positions 2115 to 2123 (GIGDRHCNN) are catalytic loop. Positions 2135–2159 (HIDLGISFDQGKNLTVPEKVPFRLT) are activation loop. Residues 2250 to 2282 (VRLSTEAVVRELIGEAVSVENLAVIFHGWTPFY) form the FATC domain.

It belongs to the PI3/PI4-kinase family. ATM subfamily. Associates with DNA double-strand breaks.

It localises to the nucleus. The protein resides in the chromosome. The protein localises to the telomere. The catalysed reaction is L-seryl-[protein] + ATP = O-phospho-L-seryl-[protein] + ADP + H(+). It carries out the reaction L-threonyl-[protein] + ATP = O-phospho-L-threonyl-[protein] + ADP + H(+). Functionally, serine/threonine protein kinase which activates checkpoint signaling upon genotoxic stresses such as ionizing radiation (IR), ultraviolet light (UV), or DNA replication stalling, thereby acting as a DNA damage sensor. Recognizes the substrate consensus sequence [ST]-Q. Phosphorylates histone H2A to form H2AS128ph (gamma-H2A) at sites of DNA damage, involved in the regulation of DNA damage response mechanism. Required for the control of telomere length and genome stability. This Yarrowia lipolytica (strain CLIB 122 / E 150) (Yeast) protein is Serine/threonine-protein kinase TEL1 (TEL1).